A 307-amino-acid chain; its full sequence is Oxygen-dependent coproporphyrinogen-III oxidase (307 aa).

Residue serine 99 participates in substrate binding. A divalent metal cation-binding residues include histidine 103 and histidine 113. The active-site Proton donor is histidine 113. Residue 115-117 (NVR) coordinates substrate. Residues histidine 152 and histidine 182 each contribute to the a divalent metal cation site. An important for dimerization region spans residues 247–282 (YVEFNLVFDRGTLFGLQSGGRTESILMSMPPVANWR). Residue 265-267 (GGR) participates in substrate binding.

Belongs to the aerobic coproporphyrinogen-III oxidase family. As to quaternary structure, homodimer. It depends on a divalent metal cation as a cofactor.

It localises to the cytoplasm. The catalysed reaction is coproporphyrinogen III + O2 + 2 H(+) = protoporphyrinogen IX + 2 CO2 + 2 H2O. The protein operates within porphyrin-containing compound metabolism; protoporphyrin-IX biosynthesis; protoporphyrinogen-IX from coproporphyrinogen-III (O2 route): step 1/1. Functionally, involved in the heme biosynthesis. Catalyzes the aerobic oxidative decarboxylation of propionate groups of rings A and B of coproporphyrinogen-III to yield the vinyl groups in protoporphyrinogen-IX. The chain is Oxygen-dependent coproporphyrinogen-III oxidase from Burkholderia cenocepacia (strain ATCC BAA-245 / DSM 16553 / LMG 16656 / NCTC 13227 / J2315 / CF5610) (Burkholderia cepacia (strain J2315)).